The sequence spans 466 residues: ATP synthase subunit beta (466 aa).

153 to 160 contacts ATP; sequence GGAGVGKT.

This sequence belongs to the ATPase alpha/beta chains family. In terms of assembly, F-type ATPases have 2 components, CF(1) - the catalytic core - and CF(0) - the membrane proton channel. CF(1) has five subunits: alpha(3), beta(3), gamma(1), delta(1), epsilon(1). CF(0) has three main subunits: a(1), b(2) and c(9-12). The alpha and beta chains form an alternating ring which encloses part of the gamma chain. CF(1) is attached to CF(0) by a central stalk formed by the gamma and epsilon chains, while a peripheral stalk is formed by the delta and b chains.

Its subcellular location is the cell membrane. The enzyme catalyses ATP + H2O + 4 H(+)(in) = ADP + phosphate + 5 H(+)(out). Functionally, produces ATP from ADP in the presence of a proton gradient across the membrane. The catalytic sites are hosted primarily by the beta subunits. This Leuconostoc citreum (strain KM20) protein is ATP synthase subunit beta.